Reading from the N-terminus, the 131-residue chain is Protein SOB FIVE-LIKE 4 (131 aa).

Disordered regions lie at residues 1-21 (MDKE…SSPI) and 40-131 (IYNY…YRMK). Polar residues predominate over residues 8-18 (SSESGWTTYLS). An SOFL-A motif is present at residues 11 to 16 (SGWTTY). The span at 46–58 (KVEHEEERNKDSD) shows a compositional bias: basic and acidic residues. The SOFL-B motif lies at 60-69 (SMASDASSGP). A compositionally biased stretch (basic and acidic residues) spans 79–109 (KALDLKNGKNEGNSKSKNDDDHHNHYHDGKK). Positions 107–114 (GKKTSNSY) match the Nuclear localization signal motif. Basic residues predominate over residues 114-131 (YRKKDKKKRENKSTYRMK).

Belongs to the SOFL plant protein family. Expressed, at low levels, in seedlings, roots, flowers and siliques.

Its subcellular location is the cytoplasm. It localises to the nucleus. Involved in cytokinin-mediated development. The chain is Protein SOB FIVE-LIKE 4 from Arabidopsis thaliana (Mouse-ear cress).